Reading from the N-terminus, the 274-residue chain is Large ribosomal subunit protein uL2 (274 aa).

A disordered region spans residues 195–274 (VGNSDHGLER…SKYIIERRKK (80 aa)). Basic residues-rich tracts occupy residues 207–220 (KAGRSRWQGRRPRN) and 244–264 (PRSRKGLYAKGLKTRAPKKQS).

Belongs to the universal ribosomal protein uL2 family. In terms of assembly, part of the 50S ribosomal subunit. Forms a bridge to the 30S subunit in the 70S ribosome.

One of the primary rRNA binding proteins. Required for association of the 30S and 50S subunits to form the 70S ribosome, for tRNA binding and peptide bond formation. It has been suggested to have peptidyltransferase activity; this is somewhat controversial. Makes several contacts with the 16S rRNA in the 70S ribosome. The polypeptide is Large ribosomal subunit protein uL2 (Bacteroides thetaiotaomicron (strain ATCC 29148 / DSM 2079 / JCM 5827 / CCUG 10774 / NCTC 10582 / VPI-5482 / E50)).